The sequence spans 920 residues: Anillin-related medial ring protein mid1 (920 aa).

A disordered region spans residues 1-452 (MKEQEFSYRE…LSSEDLRHPS (452 aa)). Phosphoserine occurs at positions 15 and 24. Threonine 34 bears the Phosphothreonine mark. Residues serine 46 and serine 62 each carry the phosphoserine modification. Residues 69-81 (LNVATDLLESLDL) carry the Nuclear export sequence (NES) 1 motif. Position 95 is a phosphoserine (serine 95). The span at 461 to 481 (RTYSNYCENEPNKSSQSLVSS) shows a compositional bias: polar residues. Serine 531 carries the phosphoserine modification. The disordered stretch occupies residues 538-561 (DLPSQDKSTSYEVPNGTENQSPRP). Polar residues predominate over residues 542 to 561 (QDKSTSYEVPNGTENQSPRP). Residues 551–920 (PNGTENQSPR…WLQEYVNFMA (370 aa)) are cryptic lipid-binding C2 domain. The Nuclear localization sequence (NLS) motif lies at 681–710 (RKFFDKLFNRRKKRKLNKAAAVENSKAKKS). The short motif at 763-773 (LGNLTLTCLYI) is the Nuclear export sequence (NES) 2 element. A PH domain is found at 802-901 (LYNEGYLYRL…WLQVMNSRSF (100 aa)).

As to quaternary structure, homodimer. Interacts with blt1 and cdr2. Interacts with gef2. Interacts with plo1 and rng2. Interacts with fhk2 and sep1. Interacts with clp1. Phosphorylated. At the onset of mitosis, becomes hyperphosphorylated, leaves the nucleus, and forms a medial ring. Phosphorylation by plo1 and other kinases may contribute to solubilizing mid1 for export from the nucleus. Phosphorylation by sid2 drives removal from the cortex at the actomyosin contractile ring constriction onset.

It localises to the nucleus. Its subcellular location is the cytoplasm. It is found in the cell cortex. The protein localises to the cytoskeleton. Its function is as follows. Scaffold protein that anchors the contractile ring (CR) at the cell equator during cytokinesis. At the onset of mitosis, membrane-bound oligomers of mid1 assemble recruitment platforms for cytokinetic ring components at the medial cortex and stabilize the ring position during its compaction. Recruits dephosphorylated myo2, but also rng2, clp1 and cdc15 to nodes and to place cytokinetic nodes around the cell equator the medial cortex to promote the ring assembly in cooperation with F-actin. Necessary to stabilize the mitotic spindle perpendicular to the axis of cell division. Also recruits the cdr2 kinase to the CR. Functionally, in the nucleus, binds to the promoter regions of M-G1 transcribed genes to negatively regulate their expression. This is Anillin-related medial ring protein mid1 from Schizosaccharomyces pombe (strain 972 / ATCC 24843) (Fission yeast).